The primary structure comprises 116 residues: CDKN2AIP N-terminal-like protein (116 aa).

Position 1 is an N-acetylmethionine (Met-1). The XRN2-binding (XTBD) domain occupies 24–116; it reads AEQFRSYSES…RSELMKKHQS (93 aa).

This sequence belongs to the CARF family. In terms of assembly, interacts with XRN2; the interaction is direct.

In Homo sapiens (Human), this protein is CDKN2AIP N-terminal-like protein (CDKN2AIPNL).